Reading from the N-terminus, the 493-residue chain is Cobyric acid synthase (493 aa).

The GATase cobBQ-type domain occupies P246–F440. C326 (nucleophile) is an active-site residue. H432 is an active-site residue.

It belongs to the CobB/CobQ family. CobQ subfamily.

The protein operates within cofactor biosynthesis; adenosylcobalamin biosynthesis. Its function is as follows. Catalyzes amidations at positions B, D, E, and G on adenosylcobyrinic A,C-diamide. NH(2) groups are provided by glutamine, and one molecule of ATP is hydrogenolyzed for each amidation. The chain is Cobyric acid synthase from Clostridium botulinum (strain Kyoto / Type A2).